We begin with the raw amino-acid sequence, 266 residues long: Expansin-A13 (266 aa).

Positions 1–19 are cleaved as a signal peptide; that stretch reads MQRFLLPLLFLALSPPAIC. The Expansin-like EG45 domain maps to 58–171; the sequence is GGACGYGDLV…RRINCRKEGS (114 aa). Residues 181–260 enclose the Expansin-like CBD domain; it reads IFISVLITNV…NWNYGQTFEG (80 aa).

Belongs to the expansin family. Expansin A subfamily.

The protein resides in the secreted. Its subcellular location is the cell wall. It localises to the membrane. Functionally, causes loosening and extension of plant cell walls by disrupting non-covalent bonding between cellulose microfibrils and matrix glucans. No enzymatic activity has been found. This Arabidopsis thaliana (Mouse-ear cress) protein is Expansin-A13 (EXPA13).